Here is a 92-residue protein sequence, read N- to C-terminus: N(2)-fixation sustaining protein CowN (92 aa).

The protein belongs to the CowN family.

In terms of biological role, is required to sustain N(2)-dependent growth in the presence of low levels of carbon monoxide (CO). Probably acts by protecting the N(2) fixation ability of the nitrogenase complex, which is inactivated in the presence of CO. The chain is N(2)-fixation sustaining protein CowN from Rhodobacter capsulatus (strain ATCC BAA-309 / NBRC 16581 / SB1003).